Reading from the N-terminus, the 124-residue chain is MVWWDDPDDAFCEDPFDPEGDYGALQVGKQPMNRYVICYDIVDDKRRLKVAKCLDSYGSRVQFSVFEVLVSKPLMTRMVRELGALINAKTDRISIYPQCATCDARRTDLGATVEKPVHEPWIIV.

Asp40 contributes to the Mg(2+) binding site.

It belongs to the CRISPR-associated endoribonuclease Cas2 protein family. As to quaternary structure, homodimer, forms a heterotetramer with a Cas1 homodimer. Mg(2+) is required as a cofactor.

CRISPR (clustered regularly interspaced short palindromic repeat), is an adaptive immune system that provides protection against mobile genetic elements (viruses, transposable elements and conjugative plasmids). CRISPR clusters contain sequences complementary to antecedent mobile elements and target invading nucleic acids. CRISPR clusters are transcribed and processed into CRISPR RNA (crRNA). Functions as a ssRNA-specific endoribonuclease. Involved in the integration of spacer DNA into the CRISPR cassette. This Rhodospirillum rubrum (strain ATCC 11170 / ATH 1.1.1 / DSM 467 / LMG 4362 / NCIMB 8255 / S1) protein is CRISPR-associated endoribonuclease Cas2 4.